Reading from the N-terminus, the 317-residue chain is Methionyl-tRNA formyltransferase (317 aa).

Position 110–113 (110–113 (SLLP)) interacts with (6S)-5,6,7,8-tetrahydrofolate.

This sequence belongs to the Fmt family.

It carries out the reaction L-methionyl-tRNA(fMet) + (6R)-10-formyltetrahydrofolate = N-formyl-L-methionyl-tRNA(fMet) + (6S)-5,6,7,8-tetrahydrofolate + H(+). Functionally, attaches a formyl group to the free amino group of methionyl-tRNA(fMet). The formyl group appears to play a dual role in the initiator identity of N-formylmethionyl-tRNA by promoting its recognition by IF2 and preventing the misappropriation of this tRNA by the elongation apparatus. In Bacillus subtilis (strain 168), this protein is Methionyl-tRNA formyltransferase.